Here is a 185-residue protein sequence, read N- to C-terminus: Adenine phosphoribosyltransferase (185 aa).

It belongs to the purine/pyrimidine phosphoribosyltransferase family. As to quaternary structure, homodimer.

It is found in the cytoplasm. The catalysed reaction is AMP + diphosphate = 5-phospho-alpha-D-ribose 1-diphosphate + adenine. The protein operates within purine metabolism; AMP biosynthesis via salvage pathway; AMP from adenine: step 1/1. Functionally, catalyzes a salvage reaction resulting in the formation of AMP, that is energically less costly than de novo synthesis. The chain is Adenine phosphoribosyltransferase from Corynebacterium glutamicum (strain ATCC 13032 / DSM 20300 / JCM 1318 / BCRC 11384 / CCUG 27702 / LMG 3730 / NBRC 12168 / NCIMB 10025 / NRRL B-2784 / 534).